The primary structure comprises 696 residues: Divalent metal transporter 1 (696 aa).

Residues Met1–Asp31 are disordered. Residues Met1 to Lys236 lie on the Cytoplasmic side of the membrane. The segment covering Ile11–Ile24 has biased composition (polar residues). The chain crosses the membrane as a helical span at residues Leu237–Leu255. At Asp256–Arg288 the chain is on the vacuolar side. Residue Asn278 is glycosylated (N-linked (GlcNAc...) asparagine). The helical transmembrane segment at Leu289–Gly311 threads the bilayer. Residues His312–Ser331 lie on the Cytoplasmic side of the membrane. The chain crosses the membrane as a helical span at residues Tyr332–Ile357. Residues Asn358–Gly362 lie on the Vacuolar side of the membrane. Residues Ile363–Leu382 traverse the membrane as a helical segment. Over Glu383 to Val393 the chain is Cytoplasmic. A helical transmembrane segment spans residues Leu394–Phe416. Residues Gln417–Asp435 lie on the Vacuolar side of the membrane. A helical transmembrane segment spans residues Thr436 to Leu455. The Cytoplasmic portion of the chain corresponds to Thr456 to Leu475. Residues Gly476–Ala499 form a helical membrane-spanning segment. The Vacuolar segment spans residues Glu500–Ser529. Residue Asn502 is glycosylated (N-linked (GlcNAc...) asparagine). The chain crosses the membrane as a helical span at residues Met530–Phe546. Residues Met547–Pro566 are Cytoplasmic-facing. A helical transmembrane segment spans residues Phe567 to Val585. At Ser586–Ser596 the chain is on the vacuolar side. A helical transmembrane segment spans residues Asn597 to Tyr615. Over Arg616 to Lys634 the chain is Cytoplasmic. Residues Tyr635 to Leu657 form a helical membrane-spanning segment. Over Gln658–Ser662 the chain is Vacuolar. A helical transmembrane segment spans residues Asn663–Phe684. The Cytoplasmic portion of the chain corresponds to Asn685 to Ser696.

The protein belongs to the NRAMP (TC 2.A.55) family.

The protein resides in the vacuole membrane. It carries out the reaction Fe(2+)(in) = Fe(2+)(out). Functionally, iron transporter. Required for parasite development during the blood stages. Required for full pathogenicity. This Plasmodium yoelii protein is Divalent metal transporter 1.